The following is a 198-amino-acid chain: Mediator of RNA polymerase II transcription subunit 22 (198 aa).

The segment at tryptophan 159–serine 198 is disordered.

This sequence belongs to the Mediator complex subunit 22 family. In terms of assembly, component of the Mediator complex.

The protein resides in the nucleus. Its function is as follows. Component of the Mediator complex, a coactivator involved in the regulated transcription of nearly all RNA polymerase II-dependent genes. Mediator functions as a bridge to convey information from gene-specific regulatory proteins to the basal RNA polymerase II transcription machinery. Mediator is recruited to promoters by direct interactions with regulatory proteins and serves as a scaffold for the assembly of a functional preinitiation complex with RNA polymerase II and the general transcription factors. This chain is Mediator of RNA polymerase II transcription subunit 22 (med22), found in Danio rerio (Zebrafish).